The primary structure comprises 221 residues: Antigenic protein SchS34 (221 aa).

N-linked (GlcNAc...) asparagine glycans are attached at residues Asn-27, Asn-69, Asn-141, and Asn-215.

As to expression, expressed in the mycelium (at protein level).

It is found in the secreted. The protein localises to the spore. Its subcellular location is the spore wall. The protein resides in the cytoplasm. This Stachybotrys chartarum (Toxic black mold) protein is Antigenic protein SchS34.